The chain runs to 58 residues: Large ribosomal subunit protein uL30 (58 aa).

The protein belongs to the universal ribosomal protein uL30 family. Part of the 50S ribosomal subunit.

This chain is Large ribosomal subunit protein uL30, found in Pelobacter propionicus (strain DSM 2379 / NBRC 103807 / OttBd1).